A 338-amino-acid chain; its full sequence is MO25-like protein 2 (338 aa).

This sequence belongs to the Mo25 family.

It is found in the cytoplasm. It localises to the cytoskeleton. Its subcellular location is the spindle pole. Regulates asymmetric cell division in Q.p neuroblast lineage. Plays a role in cell shedding during embryogenesis. The chain is MO25-like protein 2 (mop-25.2) from Caenorhabditis elegans.